The primary structure comprises 342 residues: Manganese-dependent ADP-ribose/CDP-alcohol diphosphatase (342 aa).

The Zn(2+) site is built by aspartate 18, glutamine 20, aspartate 67, asparagine 103, histidine 239, histidine 276, and histidine 278.

It belongs to the ADPRibase-Mn family. In terms of assembly, monomer. It depends on Mg(2+) as a cofactor.

The catalysed reaction is CDP-choline + H2O = phosphocholine + CMP + 2 H(+). It catalyses the reaction ADP-D-ribose + H2O = D-ribose 5-phosphate + AMP + 2 H(+). It carries out the reaction CDP-glycerol + H2O = sn-glycerol 3-phosphate + CMP + 2 H(+). Its function is as follows. Hydrolyzes ADP-ribose, IDP-ribose, CDP-glycerol, CDP-choline and CDP-ethanolamine, but not other non-reducing ADP-sugars or CDP-glucose. This Xenopus tropicalis (Western clawed frog) protein is Manganese-dependent ADP-ribose/CDP-alcohol diphosphatase (adprm).